A 1242-amino-acid polypeptide reads, in one-letter code: DNA excision repair protein ERCC-6-like (1242 aa).

The residue at position 14 (Ser14) is a Phosphoserine. Residues 21-54 form a TPR 1 repeat; that stretch reads YLRYVKEAKEATKNGDLEQALKLFNLAKDIFPNE. The Helicase ATP-binding domain occupies 109-277; it reads SLYRDGRRGG…WSLFDFACQG (169 aa). 122-129 lines the ATP pocket; that stretch reads DDMGLGKT. The DEAH box signature appears at 228-231; sequence DEAH. Positions 466–626 constitute a Helicase C-terminal domain; that stretch reads FLMDLLKKLR…PFRYFSKQEL (161 aa). A phosphoserine mark is found at Ser755 and Ser773. Thr815 is subject to Phosphothreonine. Residues Ser963, Ser989, Ser998, and Ser1021 each carry the phosphoserine modification. The residue at position 1055 (Thr1055) is a Phosphothreonine. A phosphoserine mark is found at Ser1061, Ser1090, and Ser1110. Positions 1103-1181 are disordered; that stretch reads EERLDNSSEA…LSDGQLVDSP (79 aa). 2 stretches are compositionally biased toward basic and acidic residues: residues 1105–1121 and 1130–1140; these read RLDN…HLEE and APEHTKEDPSR. A compositionally biased stretch (polar residues) spans 1141–1156; it reads ETLSSENKSSQLSTSK. Residues Ser1173 and Ser1180 each carry the phosphoserine modification. One copy of the TPR 2 repeat lies at 1192–1225; it reads YDTLVLHGKELKECGKIQEALDCLVKALDIKSSD.

This sequence belongs to the SNF2/RAD54 helicase family. As to quaternary structure, interacts with PLK1, which phosphorylates it. Both proteins are mutually dependent on each other for correct subcellular localization. Interacts (via N-terminal TPR repeat) with BEND3 (via BEN domains 1 and 3); the interaction is direct. Post-translationally, phosphorylation by PLK1 prevents the association with chromosome arms and restricts its localization to the kinetochore-centromere region.

It localises to the chromosome. The protein resides in the centromere. Its subcellular location is the kinetochore. The enzyme catalyses ATP + H2O = ADP + phosphate + H(+). Its function is as follows. DNA helicase that acts as a tension sensor that associates with catenated DNA which is stretched under tension until it is resolved during anaphase. Functions as ATP-dependent DNA translocase. Can promote Holliday junction branch migration (in vitro). This is DNA excision repair protein ERCC-6-like (ERCC6L) from Bos taurus (Bovine).